The chain runs to 129 residues: Glycine cleavage system H protein (129 aa).

The Lipoyl-binding domain maps to 24 to 106; the sequence is LLKIGVSEFA…IGNGWLLIIK (83 aa). An N6-lipoyllysine modification is found at lysine 65.

It belongs to the GcvH family. The glycine cleavage system is composed of four proteins: P, T, L and H. The cofactor is (R)-lipoate.

Its function is as follows. The glycine cleavage system catalyzes the degradation of glycine. The H protein shuttles the methylamine group of glycine from the P protein to the T protein. The polypeptide is Glycine cleavage system H protein (Prochlorococcus marinus (strain MIT 9515)).